The sequence spans 251 residues: Imidazole glycerol phosphate synthase subunit HisF (251 aa).

Catalysis depends on residues D11 and D130.

The protein belongs to the HisA/HisF family. In terms of assembly, heterodimer of HisH and HisF.

The protein resides in the cytoplasm. It carries out the reaction 5-[(5-phospho-1-deoxy-D-ribulos-1-ylimino)methylamino]-1-(5-phospho-beta-D-ribosyl)imidazole-4-carboxamide + L-glutamine = D-erythro-1-(imidazol-4-yl)glycerol 3-phosphate + 5-amino-1-(5-phospho-beta-D-ribosyl)imidazole-4-carboxamide + L-glutamate + H(+). It participates in amino-acid biosynthesis; L-histidine biosynthesis; L-histidine from 5-phospho-alpha-D-ribose 1-diphosphate: step 5/9. IGPS catalyzes the conversion of PRFAR and glutamine to IGP, AICAR and glutamate. The HisF subunit catalyzes the cyclization activity that produces IGP and AICAR from PRFAR using the ammonia provided by the HisH subunit. This is Imidazole glycerol phosphate synthase subunit HisF from Natranaerobius thermophilus (strain ATCC BAA-1301 / DSM 18059 / JW/NM-WN-LF).